Consider the following 1021-residue polypeptide: Receptor-like protein EIX2 (1021 aa).

The first 24 residues, 1-24 (MGKRTNPRHFLVTWSLLLLETAFG), serve as a signal peptide directing secretion. Positions 25–109 (LTSREVNKTL…PILTGKVSPS (85 aa)) are N-cap. At 25 to 963 (LTSREVNKTL…DDDDEFSSLE (939 aa)) the chain is on the extracellular side. A glycan (N-linked (GlcNAc...) asparagine) is linked at Asn-31. LRR repeat units follow at residues 113 to 136 (LEYL…RFIG), 138 to 161 (LKRL…QFQN), 162 to 184 (LTSL…VWLS), 186 to 211 (LSSL…ITKV), 214 to 237 (LKEL…VANS), and 239 to 262 (LISL…SWLF). Residues Asn-145 and Asn-161 are each glycosylated (N-linked (GlcNAc...) asparagine). N-linked (GlcNAc...) asparagine glycosylation is present at Asn-236. A glycan (N-linked (GlcNAc...) asparagine) is linked at Asn-263. LRR repeat units lie at residues 265–288 (STSL…RFGS), 290–313 (MYLE…SFGN), 314–337 (LTRL…LFLR), 342–365 (RKSL…VTRF), 366–388 (SSLK…RVGQ), 389–412 (VSSL…LALF), 413–436 (PSLR…IGKL), 437–459 (SQLR…MGQL), 461–483 (NLER…HFSN), 484–507 (LSSL…DWVP), 509–532 (FQLQ…LQTQ), 533–555 (NNYT…WFSN), 557–581 (PPEL…IVSK), and 583–607 (DYMI…NIQI). Asn-313 carries an N-linked (GlcNAc...) asparagine glycan. The N-linked (GlcNAc...) asparagine glycan is linked to Asn-483. N-linked (GlcNAc...) asparagine glycosylation is found at Asn-534, Asn-544, Asn-564, and Asn-593. One copy of the LRR 21; degenerate repeat lies at 608–626 (FYLHKNHFSGSISSICRNT). 6 LRR repeats span residues 627 to 651 (IGAA…WMNM), 652 to 675 (SNLA…LGSL), 677 to 698 (NLEA…FSQC), 699 to 722 (QLLQ…IGTD), 723 to 747 (LLQL…ICQL), and 749 to 773 (FLQI…NFTI). Asn-650 and Asn-663 each carry an N-linked (GlcNAc...) asparagine glycan. N-linked (GlcNAc...) asparagine glycosylation is found at Asn-770 and Asn-778. LRR repeat units lie at residues 818–842 (LLYL…IAEM), 843–866 (RGLR…IGQM), 867–890 (KLLE…LSNL), and 892–913 (FLSV…STQL). 3 N-linked (GlcNAc...) asparagine glycosylation sites follow: Asn-849, Asn-856, and Asn-889. A C-cap/acidic domain region spans residues 914-963 (QSFDRSSYSGNAQLCGPPLEECPGYAPPIDRGSNTNPQEHDDDDEFSSLE). Residues 964 to 984 (FYVSMVLGFFVTFWGILGCLI) form a helical membrane-spanning segment. The Cytoplasmic portion of the chain corresponds to 985–1021 (VNRSWRNAYFTFLTDMKSWLHMTSRVCFARLKGKLRN).

It belongs to the RLP family. In terms of assembly, interacts with EIX elicitor protein.

The protein resides in the cell membrane. Functionally, involved in plant defense. Confers resistance to the fungal pathogen T.viride through recognition of the EIX elicitor protein. The protein is Receptor-like protein EIX2 of Solanum lycopersicum (Tomato).